The sequence spans 286 residues: Pyridoxal kinase PdxY (286 aa).

Substrate contacts are provided by residues Ser-9 and 44–45 (TQ). Residues Asp-111, Glu-148, and Lys-181 each contribute to the ATP site. Asp-222 is a binding site for substrate.

It belongs to the pyridoxine kinase family. PdxY subfamily. Homodimer. Requires Mg(2+) as cofactor.

It carries out the reaction pyridoxal + ATP = pyridoxal 5'-phosphate + ADP + H(+). The protein operates within cofactor metabolism; pyridoxal 5'-phosphate salvage; pyridoxal 5'-phosphate from pyridoxal: step 1/1. Functionally, pyridoxal kinase involved in the salvage pathway of pyridoxal 5'-phosphate (PLP). Catalyzes the phosphorylation of pyridoxal to PLP. This is Pyridoxal kinase PdxY from Histophilus somni (strain 129Pt) (Haemophilus somnus).